The sequence spans 580 residues: Type 3 secretion system translocon protein SctE (580 aa).

IpgC chaperone binding domain regions lie at residues 15–45 (KILT…IADL) and 51–72 (INTT…APKS). The segment at 61 to 70 (NILIPELKAP) is mediates interaction with human MAD2L2. Residues 104 to 224 (AWKSQQQARQ…MQLEKEIDSF (121 aa)) are a coiled coil. 2 helical membrane passes run 313 to 333 (ILGA…GGAS) and 399 to 419 (IGSI…VVLV).

Belongs to the SctE/SipB/YopB family. In terms of assembly, the core secretion machinery of the T3SS is composed of approximately 20 different proteins, including cytoplasmic components, a base, an export apparatus and a needle. This subunit is involved in the formation of a pore, called the translocon, in host membrane. Interacts with IpaC/SctB. Interacts with the needle tip protein IpaD/SctA. Interacts with the molecular chaperone IpgC, which prevents premature association with IpaC/SctB within the cytoplasm of Shigella cells and protects IpaB/SctE from proteolysis. Interacts with the host protein ICE in the cytoplasm of infected macrophages. Interacts with human MAD2L2 in the G2/M phase of the cell cycle.

It localises to the secreted. Its subcellular location is the host membrane. The protein resides in the host cell. The protein localises to the host nucleus. With respect to regulation, interaction with the membrane is affected by the pH. IpaB/SctE is more efficient in destabilizing the membrane at pH 5.0 than at neutral pH. Its function is as follows. Component of the type III secretion system (T3SS), also called injectisome, which is used to inject bacterial effector proteins into eukaryotic host cells. IpaB/SctE and IpaC/SctB are inserted into the host membrane where they form a pore and allow the translocation of effector proteins into the cytosol of target cells. Interaction with IpaD/SctA at needle tips leads to the formation of the MxiH/SctF-IpaD/SctA-IpaB/SctE ternary complex, which is essential for host cell sensing. Interaction of IpaB/SctE with host membrane lipids promotes recruitment of IpaC/SctB at the needle tip concomitant with translocon insertion into the host membrane and type III secretion induction. Functionally, required for efficient dissemination. Necessary for lysis of the two cellular membranes that surround bacteria in protrusions during cell-to-cell spread. Is sufficient to induce macrophage apoptosis through activation of the interleukin-1 beta converting enzyme (ICE) in infected macrophages. In epithelial cells, causes cell-cycle arrest by targeting host MAD2L2, an anaphase-promoting complex/cyclosome (APC) inhibitor. The polypeptide is Type 3 secretion system translocon protein SctE (Shigella flexneri).